A 232-amino-acid polypeptide reads, in one-letter code: Large ribosomal subunit protein uL1 (232 aa).

It belongs to the universal ribosomal protein uL1 family. In terms of assembly, part of the 50S ribosomal subunit.

Its function is as follows. Binds directly to 23S rRNA. The L1 stalk is quite mobile in the ribosome, and is involved in E site tRNA release. In terms of biological role, protein L1 is also a translational repressor protein, it controls the translation of the L11 operon by binding to its mRNA. The chain is Large ribosomal subunit protein uL1 from Coxiella burnetii (strain CbuK_Q154) (Coxiella burnetii (strain Q154)).